We begin with the raw amino-acid sequence, 637 residues long: MSEVESREKEPDAGLSPDIVQATLPFLSSDDIKNLSQTNKYYNTLLDFDHSKILWHELFHKAFGTLKTNDEPFQGRNSAEFKTCTETILREAFPTLSWQEVYQLRAYDAKFYSWGYLKHGRLGYTASSNNELVATSLNGPSPRFKYGVNTPTEVPWFNSRTTSRTSNFTPSEDPLSAIKKDGDEIIAQVSSGGFSFQILTESGNLYSSGSTFSGGLKGPGPSGSQHDYNPFREMIHNMERSYPRITSRSNGSTVNTTGTFSGRRMSGSHPSTAYEPGNATTAQHITIDSGGAPAASPGGSHSGVPRTTMPSMGPHENIYSQIEMLERSANKAVPGNNHIRRMFARNSFPLYSGRDENLGSFNDIQFVAVSSGRSHFLAMDTDNNIYSWDSTESDQGVKIEFANLPSRATNPILKIASGWNFNCCYIYKVGLVAWKERDAIQKGESFAFAKYEIVPNTNDVNGDSRIVDFACLQDNCVFFINNNGDKLWKYHNGLNQIVDLNIVGKLCKINACFASLVLFTDTHCYTLKVTNGDVDKDSLTELDINENVISVASGDYHTVALTERGHLYSWGIESQDCGCLGLGPSEKIVNELHIGNWEGQRNIRVVKPTKIELPEDYICVSVTAGGWQTGALIIKKH.

An F-box domain is found at 14 to 63 (GLSPDIVQATLPFLSSDDIKNLSQTNKYYNTLLDFDHSKILWHELFHKAF). A Phosphoserine modification is found at Ser-16. One copy of the RCC1 1 repeat lies at 109–202 (AKFYSWGYLK…GFSFQILTES (94 aa)). The disordered stretch occupies residues 242–315 (YPRITSRSNG…RTTMPSMGPH (74 aa)). Over residues 244 to 260 (RITSRSNGSTVNTTGTF) the composition is skewed to polar residues. Ser-266 carries the post-translational modification Phosphoserine. The span at 289–305 (SGGAPAASPGGSHSGVP) shows a compositional bias: low complexity. The stretch at 565-635 (GHLYSWGIES…GWQTGALIIK (71 aa)) is one RCC1 2 repeat.

In terms of assembly, interacts with AAH1, SKP1 and CDC53. Component of the SCF(SAF1) complex containing CDC53, SKP1, HRT1 and SAF1.

It participates in protein modification; protein ubiquitination. Functionally, substrate recognition component of a SCF (SKP1-CUL1-F-box protein) E3 ubiquitin-protein ligase complex which mediates the ubiquitination and subsequent proteasomal degradation of target proteins. Targets AAH1 adenine deaminase for proteasome-dependent degradation upon entry into quiescence. Targets also URA7. This Saccharomyces cerevisiae (strain ATCC 204508 / S288c) (Baker's yeast) protein is SCF-associated factor 1 (SAF1).